The chain runs to 101 residues: Large ribosomal subunit protein uL24 (101 aa).

Belongs to the universal ribosomal protein uL24 family. Part of the 50S ribosomal subunit.

One of two assembly initiator proteins, it binds directly to the 5'-end of the 23S rRNA, where it nucleates assembly of the 50S subunit. In terms of biological role, one of the proteins that surrounds the polypeptide exit tunnel on the outside of the subunit. This is Large ribosomal subunit protein uL24 from Streptococcus suis (strain 98HAH33).